Here is a 542-residue protein sequence, read N- to C-terminus: Beta-amylase 2, chloroplastic (542 aa).

The transit peptide at 1 to 55 (MAIRLNHSVIPVSVKLGAPTRVSARSSLPFSVGDWRGVSTFSGARPLVLAKVKLR) directs the protein to the chloroplast. Residues aspartate 136, histidine 176, and aspartate 184 each coordinate substrate. Glutamate 269 functions as the Proton donor in the catalytic mechanism. Positions 377, 382, and 424 each coordinate substrate. Glutamate 465 (proton acceptor) is an active-site residue. Substrate contacts are provided by residues 466 to 467 (NA) and arginine 501.

The protein belongs to the glycosyl hydrolase 14 family.

It localises to the plastid. Its subcellular location is the chloroplast. It carries out the reaction Hydrolysis of (1-&gt;4)-alpha-D-glucosidic linkages in polysaccharides so as to remove successive maltose units from the non-reducing ends of the chains.. Its activity is regulated as follows. Redox regulation; active in reducing conditions, inactive in oxidizing conditions. Its function is as follows. Low beta-amylase activity. Interacts poorly with starch or other alpha-1,4-glucan. This chain is Beta-amylase 2, chloroplastic (BAM2), found in Arabidopsis thaliana (Mouse-ear cress).